A 463-amino-acid polypeptide reads, in one-letter code: A-type ATP synthase subunit B (463 aa).

Belongs to the ATPase alpha/beta chains family. In terms of assembly, has multiple subunits with at least A(3), B(3), C, D, E, F, H, I and proteolipid K(x).

The protein localises to the cell membrane. Component of the A-type ATP synthase that produces ATP from ADP in the presence of a proton gradient across the membrane. The B chain is a regulatory subunit. This Methanothrix thermoacetophila (strain DSM 6194 / JCM 14653 / NBRC 101360 / PT) (Methanosaeta thermophila) protein is A-type ATP synthase subunit B.